Here is a 297-residue protein sequence, read N- to C-terminus: ER membrane protein complex subunit 2-A (297 aa).

TPR repeat units lie at residues 87–120 (HRVKRLTGLRFEAMERYDDALQIYDRILQDDPTN), 155–188 (QEAWHELAELYINELDYAKAAFCLEELILTNPHN), and 192–225 (YQQFAEVKYTQGGLENLELSRKYFSQALKLNNHN).

Belongs to the EMC2 family. Component of the ER membrane protein complex (EMC).

Its subcellular location is the endoplasmic reticulum membrane. Its function is as follows. Part of the endoplasmic reticulum membrane protein complex (EMC) that enables the energy-independent insertion into endoplasmic reticulum membranes of newly synthesized membrane proteins. Preferentially accommodates proteins with transmembrane domains that are weakly hydrophobic or contain destabilizing features such as charged and aromatic residues. Involved in the cotranslational insertion of multi-pass membrane proteins in which stop-transfer membrane-anchor sequences become ER membrane spanning helices. It is also required for the post-translational insertion of tail-anchored/TA proteins in endoplasmic reticulum membranes. By mediating the proper cotranslational insertion of N-terminal transmembrane domains in an N-exo topology, with translocated N-terminus in the lumen of the ER, controls the topology of multi-pass membrane proteins. By regulating the insertion of various proteins in membranes, it is indirectly involved in many cellular processes. The chain is ER membrane protein complex subunit 2-A (emc2-a) from Xenopus laevis (African clawed frog).